The chain runs to 568 residues: Sulfite reductase [NADPH] hemoprotein beta-component (568 aa).

[4Fe-4S] cluster is bound by residues Cys426, Cys432, Cys471, and Cys475. Residue Cys475 participates in siroheme binding.

The protein belongs to the nitrite and sulfite reductase 4Fe-4S domain family. As to quaternary structure, alpha(8)-beta(8). The alpha component is a flavoprotein, the beta component is a hemoprotein. Siroheme serves as cofactor. Requires [4Fe-4S] cluster as cofactor.

It catalyses the reaction hydrogen sulfide + 3 NADP(+) + 3 H2O = sulfite + 3 NADPH + 4 H(+). Its pathway is sulfur metabolism; hydrogen sulfide biosynthesis; hydrogen sulfide from sulfite (NADPH route): step 1/1. In terms of biological role, component of the sulfite reductase complex that catalyzes the 6-electron reduction of sulfite to sulfide. This is one of several activities required for the biosynthesis of L-cysteine from sulfate. The sequence is that of Sulfite reductase [NADPH] hemoprotein beta-component from Xylella fastidiosa (strain M12).